A 592-amino-acid chain; its full sequence is Putative amidase ARB_02965 (592 aa).

The N-terminal stretch at 1-21 (MKGPITFLLQLGAVYTSIASA) is a signal peptide. Asparagine 120 is a glycosylation site (N-linked (GlcNAc...) asparagine). Lysine 161 (charge relay system) is an active-site residue. Asparagine 217 carries an N-linked (GlcNAc...) asparagine glycan. Catalysis depends on serine 242, which acts as the Charge relay system. Residues serine 242 and 263–266 (TSGS) contribute to the substrate site. The Acyl-ester intermediate role is filled by serine 266. 3 N-linked (GlcNAc...) asparagine glycosylation sites follow: asparagine 326, asparagine 430, and asparagine 528.

This sequence belongs to the amidase family.

Its subcellular location is the secreted. This chain is Putative amidase ARB_02965, found in Arthroderma benhamiae (strain ATCC MYA-4681 / CBS 112371) (Trichophyton mentagrophytes).